The following is a 675-amino-acid chain: DNA ligase (675 aa).

Residues 35 to 39 (DAVYD), 84 to 85 (SL), and Glu118 each bind NAD(+). Lys120 functions as the N6-AMP-lysine intermediate in the catalytic mechanism. Arg141, Glu178, Lys295, and Lys319 together coordinate NAD(+). Residues Cys413, Cys416, Cys431, and Cys436 each contribute to the Zn(2+) site. The BRCT domain maps to 598 to 675 (GAIGALTGQT…DEAELKALLS (78 aa)).

The protein belongs to the NAD-dependent DNA ligase family. LigA subfamily. The cofactor is Mg(2+). Mn(2+) serves as cofactor.

It catalyses the reaction NAD(+) + (deoxyribonucleotide)n-3'-hydroxyl + 5'-phospho-(deoxyribonucleotide)m = (deoxyribonucleotide)n+m + AMP + beta-nicotinamide D-nucleotide.. Functionally, DNA ligase that catalyzes the formation of phosphodiester linkages between 5'-phosphoryl and 3'-hydroxyl groups in double-stranded DNA using NAD as a coenzyme and as the energy source for the reaction. It is essential for DNA replication and repair of damaged DNA. The protein is DNA ligase of Synechococcus sp. (strain RCC307).